The sequence spans 299 residues: Protoheme IX farnesyltransferase 1 (299 aa).

The next 8 membrane-spanning stretches (helical) occupy residues 25–45, 47–67, 95–115, 119–139, 147–167, 173–193, 226–246, and 279–299; these read VVVL…RAGV, WTVL…AAAV, TGAL…LLTF, LTAW…TGFL, IVIG…AATG, PLLL…ALAI, ALLA…LYLI, and IWYL…LLNL.

This sequence belongs to the UbiA prenyltransferase family. Protoheme IX farnesyltransferase subfamily.

It is found in the cell inner membrane. The enzyme catalyses heme b + (2E,6E)-farnesyl diphosphate + H2O = Fe(II)-heme o + diphosphate. The protein operates within porphyrin-containing compound metabolism; heme O biosynthesis; heme O from protoheme: step 1/1. Converts heme B (protoheme IX) to heme O by substitution of the vinyl group on carbon 2 of heme B porphyrin ring with a hydroxyethyl farnesyl side group. The protein is Protoheme IX farnesyltransferase 1 of Pseudomonas fluorescens (strain Pf0-1).